The chain runs to 474 residues: tRNA-2-methylthio-N(6)-dimethylallyladenosine synthase (474 aa).

The MTTase N-terminal domain maps to 3 to 120; sequence KKLHIKTWGC…LPEMIDQVQR (118 aa). [4Fe-4S] cluster contacts are provided by Cys12, Cys49, Cys83, Cys157, Cys161, and Cys164. The region spanning 143–375 is the Radical SAM core domain; that stretch reads RADGPTAFVS…QDRITQQAMR (233 aa). Positions 378–441 constitute a TRAM domain; it reads RQMLGTVQRI…TNSLRGIFIR (64 aa).

This sequence belongs to the methylthiotransferase family. MiaB subfamily. In terms of assembly, monomer. Requires [4Fe-4S] cluster as cofactor.

The protein localises to the cytoplasm. The enzyme catalyses N(6)-dimethylallyladenosine(37) in tRNA + (sulfur carrier)-SH + AH2 + 2 S-adenosyl-L-methionine = 2-methylsulfanyl-N(6)-dimethylallyladenosine(37) in tRNA + (sulfur carrier)-H + 5'-deoxyadenosine + L-methionine + A + S-adenosyl-L-homocysteine + 2 H(+). Catalyzes the methylthiolation of N6-(dimethylallyl)adenosine (i(6)A), leading to the formation of 2-methylthio-N6-(dimethylallyl)adenosine (ms(2)i(6)A) at position 37 in tRNAs that read codons beginning with uridine. The chain is tRNA-2-methylthio-N(6)-dimethylallyladenosine synthase from Shewanella denitrificans (strain OS217 / ATCC BAA-1090 / DSM 15013).